A 1315-amino-acid polypeptide reads, in one-letter code: Probable nucleoporin C890.06 (1315 aa).

It belongs to the non-repetitive/WGA-negative nucleoporin family.

The protein localises to the cytoplasm. It is found in the nucleus. The polypeptide is Probable nucleoporin C890.06 (Schizosaccharomyces pombe (strain 972 / ATCC 24843) (Fission yeast)).